Reading from the N-terminus, the 436-residue chain is Forkhead box protein I3 (436 aa).

The residue at position 132 (Ser132) is a Phosphoserine. Positions 158-252 (RPPYSYSALI…DNGNFRRKRK (95 aa)) form a DNA-binding region, fork-head. Positions 248–254 (RRKRKRR) match the Nuclear localization signal motif. Disordered stretches follow at residues 249-319 (RKRK…PGGS) and 340-410 (SSSG…SGGQ). Residues 257 to 277 (ASSASTSTVAAGTTKSEEGLS) show a composition bias toward low complexity. The segment covering 278–287 (SGLGSGVGGK) has biased composition (gly residues). 2 positions are modified to phosphoserine: Ser292 and Ser302. The segment covering 385 to 410 (SNGASSGSGQRSSYYSPFPASTSGGQ) has biased composition (low complexity). The 9aaTAD motif lies at 422-430 (SMVNSLIYP).

Phosphorylation promotes the transcription factor activity. Dephosphorylation by protein phosphatase 2A (PP2A) reduces its activity.

The protein resides in the nucleus. Its function is as follows. Transcription factor required for pharyngeal arch development, and which is involved in hair, ear, jaw and dental development. May act as a pioneer transcription factor during pharyngeal arch development. Required for the development of the epithelium of hair and whisker placodes and that of teeth. Required for hair follicle stem cell specification. Acts downstream of TBX1 for the formation of the thymus and parathyroid glands from the third pharyngeal pouch. The chain is Forkhead box protein I3 from Canis lupus familiaris (Dog).